Reading from the N-terminus, the 394-residue chain is MNSIIELTDYYSSNNYAPLKLVISKGKGVKVWDTDGKQYIDCISGFSVANQGHCHPTIVKAMTEQASKLSIISRVLYSDNLGKWEEKICHLAKKDKVLSLNSGTEAVEAAIKIARKWGSEVKGITDGQVEIIAMNNNFHGRTLGSLSLSNHDAYKAGFHPLLQGTTTVDFGDIEQLTQAISPNTAAIILEPIQGEGGVNIPPKGYIQAVRQLCDKHQILMIADEIQVGLGRTGKWFAMEWEQVVPDIYILGKALGGGLYPVSAVLANNDVMRVLTPGTHGSTFGGNPLAIAISTAALDVLKDEQLVERSERLGSFLLKALLQLKHPSIKEIRGRGLFIGIELNTDAAPFVDQLIQRGILCKDTHRTIIRLSPPLVIDKEEIHQIVAAFQDVFKN.

Residue Lys252 is modified to N6-(pyridoxal phosphate)lysine.

This sequence belongs to the class-III pyridoxal-phosphate-dependent aminotransferase family. OAT subfamily. It depends on pyridoxal 5'-phosphate as a cofactor.

Its subcellular location is the cytoplasm. It catalyses the reaction a 2-oxocarboxylate + L-ornithine = L-glutamate 5-semialdehyde + an L-alpha-amino acid. It participates in amino-acid biosynthesis; L-proline biosynthesis; L-glutamate 5-semialdehyde from L-ornithine: step 1/1. Its function is as follows. Catalyzes the interconversion of ornithine to glutamate semialdehyde. This is Ornithine aminotransferase 1 from Staphylococcus aureus (strain Mu50 / ATCC 700699).